The chain runs to 308 residues: Ectoine dioxygenase (308 aa).

Gln131 serves as a coordination point for L-ectoine. Lys137 contacts 2-oxoglutarate. His148, Asp150, and His249 together coordinate Fe cation.

Belongs to the PhyH family. EctD subfamily. Homodimer. It depends on Fe(2+) as a cofactor.

It carries out the reaction L-ectoine + 2-oxoglutarate + O2 = 5-hydroxyectoine + succinate + CO2. In terms of biological role, involved in the biosynthesis of 5-hydroxyectoine, called compatible solute, which helps organisms to survive extreme osmotic stress by acting as a highly soluble organic osmolyte. Catalyzes the 2-oxoglutarate-dependent selective hydroxylation of L-ectoine to yield (4S,5S)-5-hydroxyectoine. This Bordetella parapertussis (strain 12822 / ATCC BAA-587 / NCTC 13253) protein is Ectoine dioxygenase.